The primary structure comprises 528 residues: GMP synthase [glutamine-hydrolyzing] (528 aa).

The 192-residue stretch at 13–204 (AIVILDFGSQ…VYDICSCEPD (192 aa)) folds into the Glutamine amidotransferase type-1 domain. Cys-90 serves as the catalytic Nucleophile. Active-site residues include His-178 and Glu-180. Residues 205–403 (WTTNLFIDEA…LGLPDEIVRR (199 aa)) enclose the GMPS ATP-PPase domain. 232-238 (SGGVDSS) provides a ligand contact to ATP.

Homodimer.

The catalysed reaction is XMP + L-glutamine + ATP + H2O = GMP + L-glutamate + AMP + diphosphate + 2 H(+). It functions in the pathway purine metabolism; GMP biosynthesis; GMP from XMP (L-Gln route): step 1/1. In terms of biological role, catalyzes the synthesis of GMP from XMP. This is GMP synthase [glutamine-hydrolyzing] from Prochlorococcus marinus (strain NATL2A).